The primary structure comprises 162 residues: Chemoreceptor glutamine deamidase CheD (162 aa).

Belongs to the CheD family. Forms a complex with CheC.

It catalyses the reaction L-glutaminyl-[protein] + H2O = L-glutamyl-[protein] + NH4(+). Functionally, deamidates glutamine residues to glutamate on methyl-accepting chemotaxis receptors (MCPs). CheD-mediated MCP deamidation is required for productive communication of the conformational signals of the chemoreceptors to the CheA kinase. This chain is Chemoreceptor glutamine deamidase CheD, found in Halalkalibacterium halodurans (strain ATCC BAA-125 / DSM 18197 / FERM 7344 / JCM 9153 / C-125) (Bacillus halodurans).